Here is an 867-residue protein sequence, read N- to C-terminus: Prominin-1 (867 aa).

An N-terminal signal peptide occupies residues 1–19 (MALVFSALLLLGLCGKISS). At 20-107 (EGQPAFHNTP…VLALKIALYE (88 aa)) the chain is on the extracellular side. Residues 108–128 (IGVLICAILGLLFIILMPLVG) form a helical membrane-spanning segment. Over 129–158 (CFFCMCRCCNKCGGEMHQRQKQNAPCRRKC) the chain is Cytoplasmic. The chain crosses the membrane as a helical span at residues 159 to 179 (LGLSLLVICLLMSLGIIYGFV). Over 180 to 434 (ANQQTRTRIK…LPKLEEYDSY (255 aa)) the chain is Extracellular. Residues lysine 226, lysine 258, and lysine 265 each carry the N6-acetyllysine modification. 5 N-linked (GlcNAc...) asparagine glycosylation sites follow: asparagine 273, asparagine 291, asparagine 332, asparagine 374, and asparagine 415. Residues 435–455 (WWLGGLIVCFLLTLIVTFFFL) form a helical membrane-spanning segment. The Cytoplasmic segment spans residues 456–487 (GLLCGVFGYDKHATPTRRGCVSNTGGIFLMAG). The chain crosses the membrane as a helical span at residues 488–508 (VGFGFLFCWILMILVVLTFVV). The Extracellular segment spans residues 509–794 (GANVEKLLCE…LCGYVADPLN (286 aa)). N-linked (GlcNAc...) asparagine glycosylation is found at asparagine 554, asparagine 581, and asparagine 732. The helical transmembrane segment at 795-815 (LFWFGIGKATVLLLPAVIIAI) threads the bilayer. The Cytoplasmic portion of the chain corresponds to 816 to 867 (KLAKYYRRMDSEDVYDDVETVPMKNLEIGSNGYHKDHLYGVHNPVMTSPSRY). Serine 865 carries the phosphoserine modification.

It belongs to the prominin family. In terms of assembly, interacts with CDHR1 and with actin filaments. Interacts with NAT8 and NAT8B. Post-translationally, acetylation at Lys-226, Lys-258 and Lys-265 by NAT8 and NAT8B may control PROM1 protein expression and its function in cell apoptosis. As to expression, in the submandibular gland, expressed on the apical side of epithelial cells. In the parotid gland, expressed in the intercalated ducts. In the sublingual gland, expressed in intercalated ducts. In the extraorbital lacrimal gland, expressed in the intercalated tubules and larger intralobular ducts. Expressed in the retina. Present in urine within small membrane particles (at protein level). In the embryo, expressed on the apical side of neuroepithelial cells and of other epithelia such as lung buds, gut and ureter buds. In the adult, expressed at the apical side of the kidney tubules and of the ependymal layer of the brain. Not expressed in gut, liver, lung, pituitary, adrenal, heart or spleen. Localized to the nascent disk membranes at the base of the rod outer segment in the retina (at protein level).

The protein resides in the apical cell membrane. It is found in the cell projection. Its subcellular location is the microvillus membrane. The protein localises to the cilium. It localises to the photoreceptor outer segment. The protein resides in the endoplasmic reticulum. It is found in the endoplasmic reticulum-Golgi intermediate compartment. Functionally, may play a role in cell differentiation, proliferation and apoptosis. Binds cholesterol in cholesterol-containing plasma membrane microdomains and may play a role in the organization of the apical plasma membrane in epithelial cells. During early retinal development acts as a key regulator of disk morphogenesis. Involved in regulation of MAPK and Akt signaling pathways. In neuroblastoma cells suppresses cell differentiation such as neurite outgrowth in a RET-dependent manner. This Mus musculus (Mouse) protein is Prominin-1 (Prom1).